The primary structure comprises 436 residues: Alpha-galactosidase mel1 (436 aa).

Residues Met-1 to Gly-24 form the signal peptide. Cys-45 and Cys-77 are joined by a disulfide. The N-linked (GlcNAc...) asparagine glycan is linked to Asn-84. Cysteines 126 and 156 form a disulfide. The Nucleophile role is filled by Asp-154. The N-linked (GlcNAc...) asparagine glycan is linked to Asn-180. Residue Asp-214 is the Proton donor of the active site.

Belongs to the glycosyl hydrolase 27 family.

It is found in the endoplasmic reticulum lumen. The protein localises to the secreted. The enzyme catalyses Hydrolysis of terminal, non-reducing alpha-D-galactose residues in alpha-D-galactosides, including galactose oligosaccharides, galactomannans and galactolipids.. Secreted alpha-galactosidase required for catabolic conversion of melibiose to glucose and galactose. The sequence is that of Alpha-galactosidase mel1 (mel1) from Schizosaccharomyces pombe (strain 972 / ATCC 24843) (Fission yeast).